Here is a 200-residue protein sequence, read N- to C-terminus: Large ribosomal subunit protein uL4 (200 aa).

Residues 45-64 (QKTRAEVSGGGIKPWRQKGT) form a disordered region.

Belongs to the universal ribosomal protein uL4 family. In terms of assembly, part of the 50S ribosomal subunit.

Functionally, one of the primary rRNA binding proteins, this protein initially binds near the 5'-end of the 23S rRNA. It is important during the early stages of 50S assembly. It makes multiple contacts with different domains of the 23S rRNA in the assembled 50S subunit and ribosome. Its function is as follows. Forms part of the polypeptide exit tunnel. The polypeptide is Large ribosomal subunit protein uL4 (Psychrobacter cryohalolentis (strain ATCC BAA-1226 / DSM 17306 / VKM B-2378 / K5)).